Consider the following 85-residue polypeptide: Sec-independent protein translocase protein TatA (85 aa).

A helical membrane pass occupies residues 1 to 21 (MGGISIWQLLIIALIVVLLFG). The interval 43-85 (MSSEEDKKALEDAEAAKPVQTAQTAQPTQQATEKKPESNKEQA) is disordered. Residues 46-57 (EEDKKALEDAEA) are compositionally biased toward basic and acidic residues. Low complexity predominate over residues 58–73 (AKPVQTAQTAQPTQQA). Positions 74–85 (TEKKPESNKEQA) are enriched in basic and acidic residues.

This sequence belongs to the TatA/E family. In terms of assembly, the Tat system comprises two distinct complexes: a TatABC complex, containing multiple copies of TatA, TatB and TatC subunits, and a separate TatA complex, containing only TatA subunits. Substrates initially bind to the TatABC complex, which probably triggers association of the separate TatA complex to form the active translocon.

It localises to the cell inner membrane. In terms of biological role, part of the twin-arginine translocation (Tat) system that transports large folded proteins containing a characteristic twin-arginine motif in their signal peptide across membranes. TatA could form the protein-conducting channel of the Tat system. The chain is Sec-independent protein translocase protein TatA from Shewanella sp. (strain MR-4).